The chain runs to 1345 residues: Aldehyde oxidase 2 (1345 aa).

A 2Fe-2S ferredoxin-type domain is found at 9–96 (DDLEFFVNGR…GAAVTTVEGV (88 aa)). Positions 48, 53, 56, and 78 each coordinate [2Fe-2S] cluster. Glutamine 117 serves as a coordination point for Mo-molybdopterin. Positions 118, 121, 153, and 155 each coordinate [2Fe-2S] cluster. Cysteine 155 is a Mo-molybdopterin binding site. In terms of domain architecture, FAD-binding PCMH-type spans 238–423 (FYGERITWIA…GSVYIPHSQK (186 aa)). Residues 266 to 273 (LISGNTAL), alanine 347, serine 356, histidine 360, aspartate 369, and leucine 413 contribute to the FAD site. Mo-molybdopterin is bound by residues 812–813 (GF), 1094–1097 (ASVG), glutamine 1209, and leucine 1274. Glutamate 1276 serves as the catalytic Proton acceptor; for azaheterocycle hydroxylase activity.

The protein belongs to the xanthine dehydrogenase family. As to quaternary structure, homodimer. It depends on [2Fe-2S] cluster as a cofactor. Requires FAD as cofactor. Mo-molybdopterin is required as a cofactor. In terms of tissue distribution, expressed in olfactory mucosa epithelium (at protein level). Detected in skin.

It is found in the cytoplasm. It catalyses the reaction an aldehyde + O2 + H2O = a carboxylate + H2O2 + H(+). Functionally, oxidase with broad substrate specificity, oxidizing aromatic azaheterocycles, such as phthalazine, as well as aldehydes, such as benzaldehyde and retinal. Cannot use hypoxanthine as substrate. The sequence is that of Aldehyde oxidase 2 (Aox2) from Mus musculus (Mouse).